We begin with the raw amino-acid sequence, 435 residues long: Putative dimethyl sulfoxide reductase membrane subunit C (435 aa).

A run of 11 helical transmembrane segments spans residues G22–L42, W57–L77, L95–I115, V135–L155, F186–I206, L220–V240, L257–A277, L281–G301, V304–P324, I333–F353, and V392–L412.

The protein belongs to the NrfD family. In terms of assembly, probable multiprotein complex that likely consists of DmsA, DmsB and DmsC.

The protein localises to the cell membrane. Its function is as follows. Dimethyl sulfoxide (DMSO) reductase catalyzes the reduction of dimethyl sulfoxide (DMSO) to dimethyl sulfide (DMS) during anaerobic respiration; it can also use trimethylamine N-oxide (TMAO) as terminal electron acceptor. Subunit C is proposed to be a membrane anchoring subunit. In Halobacterium salinarum (strain ATCC 700922 / JCM 11081 / NRC-1) (Halobacterium halobium), this protein is Putative dimethyl sulfoxide reductase membrane subunit C (dmsC).